Reading from the N-terminus, the 366-residue chain is Probable protein arginine N-methyltransferase 1.2 (366 aa).

Residues 45–347 (ADYYFDSYSH…NPRDVDIKLS (303 aa)) enclose the SAM-dependent MTase PRMT-type domain. Active-site residues include glutamate 157 and glutamate 166.

It belongs to the class I-like SAM-binding methyltransferase superfamily. Protein arginine N-methyltransferase family. As to quaternary structure, interacts with FIB2 and PRMT11.

It is found in the nucleus. The protein localises to the cytoplasm. Its function is as follows. Methylates (mono and asymmetric dimethylation) the guanidino nitrogens of arginyl residues present in a glycine and arginine-rich domain. Type I arginine methyltransferase active on both histones and non-histone proteins. Mediates the methylation of MED36A. This is Probable protein arginine N-methyltransferase 1.2 (PRMT12) from Arabidopsis thaliana (Mouse-ear cress).